Here is a 920-residue protein sequence, read N- to C-terminus: 2-oxoglutarate dehydrogenase E1 component (920 aa).

This sequence belongs to the alpha-ketoglutarate dehydrogenase family. As to quaternary structure, homodimer. Part of the 2-oxoglutarate dehydrogenase (OGDH) complex composed of E1 (2-oxoglutarate dehydrogenase), E2 (dihydrolipoamide succinyltransferase) and E3 (dihydrolipoamide dehydrogenase); the complex contains multiple copies of the three enzymatic components (E1, E2 and E3). Thiamine diphosphate is required as a cofactor.

The catalysed reaction is N(6)-[(R)-lipoyl]-L-lysyl-[protein] + 2-oxoglutarate + H(+) = N(6)-[(R)-S(8)-succinyldihydrolipoyl]-L-lysyl-[protein] + CO2. Functionally, E1 component of the 2-oxoglutarate dehydrogenase (OGDH) complex which catalyzes the decarboxylation of 2-oxoglutarate, the first step in the conversion of 2-oxoglutarate to succinyl-CoA and CO(2). This is 2-oxoglutarate dehydrogenase E1 component from Leptospira interrogans serogroup Icterohaemorrhagiae serovar copenhageni (strain Fiocruz L1-130).